The primary structure comprises 310 residues: Putative integrase/recombinase y4rE (310 aa).

The 78-residue stretch at R6 to A83 folds into the Core-binding (CB) domain. The 198-residue stretch at P104–E301 folds into the Tyr recombinase domain. Residues R148, K173, H245, R248, and H279 contribute to the active site. The active-site O-(3'-phospho-DNA)-tyrosine intermediate is Y288.

It belongs to the 'phage' integrase family.

This chain is Putative integrase/recombinase y4rE, found in Sinorhizobium fredii (strain NBRC 101917 / NGR234).